The primary structure comprises 72 residues: Translation initiation factor IF-1 (72 aa).

Residues 1-72 (MSKDDSIEFE…TKGRITYRMK (72 aa)) enclose the S1-like domain.

The protein belongs to the IF-1 family. In terms of assembly, component of the 30S ribosomal translation pre-initiation complex which assembles on the 30S ribosome in the order IF-2 and IF-3, IF-1 and N-formylmethionyl-tRNA(fMet); mRNA recruitment can occur at any time during PIC assembly.

It is found in the cytoplasm. Its function is as follows. One of the essential components for the initiation of protein synthesis. Stabilizes the binding of IF-2 and IF-3 on the 30S subunit to which N-formylmethionyl-tRNA(fMet) subsequently binds. Helps modulate mRNA selection, yielding the 30S pre-initiation complex (PIC). Upon addition of the 50S ribosomal subunit IF-1, IF-2 and IF-3 are released leaving the mature 70S translation initiation complex. In Xanthomonas euvesicatoria pv. vesicatoria (strain 85-10) (Xanthomonas campestris pv. vesicatoria), this protein is Translation initiation factor IF-1.